The following is a 158-amino-acid chain: UPF0311 protein CA_C3321 (158 aa).

Belongs to the UPF0311 family.

The polypeptide is UPF0311 protein CA_C3321 (Clostridium acetobutylicum (strain ATCC 824 / DSM 792 / JCM 1419 / IAM 19013 / LMG 5710 / NBRC 13948 / NRRL B-527 / VKM B-1787 / 2291 / W)).